Consider the following 146-residue polypeptide: Flavodoxin (146 aa).

The Flavodoxin-like domain maps to 4–143 (ALIVYGSTTG…EVLDWAREVL (140 aa)).

It belongs to the flavodoxin family. It depends on FMN as a cofactor.

Its function is as follows. Electron-transfer proteins that function in various electron transport systems in microorganisms. Functionally interchangeable with ferredoxin. This chain is Flavodoxin, found in Megalodesulfovibrio gigas (strain ATCC 19364 / DSM 1382 / NCIMB 9332 / VKM B-1759) (Desulfovibrio gigas).